Here is a 910-residue protein sequence, read N- to C-terminus: Auxilin (910 aa).

Tandem repeats lie at residues 33 to 36 (NLKD), 37 to 40 (NLKD), and 41 to 44 (TLKD). Residues 33–44 (NLKDNLKDTLKD) form a 3 X 4 AA approximate tandem repeats region. The Phosphatase tensin-type domain occupies 52–219 (SVTSYTKGDL…GYMCDLLADK (168 aa)). Serine 109 carries the phosphoserine modification. Cysteine 161 (phosphocysteine intermediate) is an active-site residue. Residues 225–363 (FKPLTIKSIT…FQVTLDVELQ (139 aa)) form the C2 tensin-type domain. The SH3-binding signature appears at 406–414 (PIDIPPDNP). Residues 448 to 772 (QESEQSDDEL…RGKAAANLEG (325 aa)) are disordered. 4 positions are modified to phosphoserine: serine 450, serine 453, serine 560, and serine 567. Positions 547–569 (PSGPTSTQSTPRRSATSTSASPT) are enriched in low complexity. The segment covering 596 to 626 (FLNTASASSDPFLQPTRSPSPTVHASSTPAV) has biased composition (polar residues). Low complexity predominate over residues 651-666 (SAATSPTGSSHGTPTH). Gly residues predominate over residues 715-725 (MGGGWQQGGGY). Residues 732 to 758 (SKPQSSMPHSSPQNRPNYNVSFSSMPG) are compositionally biased toward polar residues. In terms of domain architecture, J spans 846–910 (TKWKPVGMAD…FENQGQKPLY (65 aa)).

Forms a complex composed of HSPA8, CLTC and DNAJC6. Interacts with HSPA8/HSC70 in an ATP-dependent manner; this interaction stimulates the HSPA8's ATPase activity. Interacts with CLTC; this interaction produces a local change in heavy-chain contacts, creating a detectable global distortion of the clathrin coat. Interacts with AP2A2. Interacts with DNM1(GTP-bound form); this interaction allows clathrin-coated vesicle (CCV) formation at the plasma membrane. The N-terminus is blocked. In terms of processing, phosphorylation at Ser-567 modulates its ability to bind CLTC and therefore the synaptic vesicle endocytosis (SVE). As to expression, brain.

It is found in the cytoplasmic vesicle. Its subcellular location is the clathrin-coated vesicle. In terms of biological role, may act as a protein phosphatase and/or a lipid phosphatase. Co-chaperone that recruits HSPA8/HSC70 to clathrin-coated vesicles (CCVs) and promotes the ATP-dependent dissociation of clathrin from CCVs and participates in clathrin-mediated endocytosis of synaptic vesicles and their recycling and also in intracellular trafficking. Firstly, binds tightly to the clathrin cages, at a ratio of one DNAJC6 per clathrin triskelion. The HSPA8:ATP complex then binds to the clathrin-auxilin cage, initially at a ratio of one HSPA8 per triskelion leading to ATP hydrolysis stimulation and causing a conformational change in the HSPA8. This cycle is repeated three times to drive to a complex containing the clathrin-auxilin cage associated to three HSPA8:ADP complex. The ATP hydrolysis of the third HSPA8:ATP complex leads to a concerted dismantling of the cage into component triskelia. Then, dissociates from the released triskelia and be recycled to initiate another cycle of HSPA8's recruitment. Also acts during the early steps of clathrin-coated vesicle (CCV) formation through its interaction with the GTP bound form of DNM1. The sequence is that of Auxilin from Bos taurus (Bovine).